The chain runs to 125 residues: MIDAPRIIVQVQSVYAGSQSLPEEARFVFAYTVTLRNLGRFNVQLLRRYWLITNGNGRQTEVQGEGVIGEQPLIQPNGEFQYTSGAIIETPCGTMEGHYEMVDHQGHTFRIAIPVFRLAIPSLIN.

One can recognise an ApaG domain in the interval 1-125 (MIDAPRIIVQ…FRLAIPSLIN (125 aa)).

The chain is Protein ApaG from Edwardsiella ictaluri (strain 93-146).